A 379-amino-acid chain; its full sequence is uncharacterized protein (379 aa).

The helical transmembrane segment at 9–26 threads the bilayer; it reads YFQLITTIFLISSITIAA.

It to A.liquefaciens L-sorbosone dehydrogenase.

It localises to the membrane. This is an uncharacterized protein from Borreliella burgdorferi (strain ATCC 35210 / DSM 4680 / CIP 102532 / B31) (Borrelia burgdorferi).